Consider the following 205-residue polypeptide: ATP-dependent Clp protease proteolytic subunit (205 aa).

Ser-101 (nucleophile) is an active-site residue. His-126 is an active-site residue.

This sequence belongs to the peptidase S14 family. In terms of assembly, component of the chloroplastic Clp protease core complex.

The protein localises to the plastid. The protein resides in the chloroplast stroma. It catalyses the reaction Hydrolysis of proteins to small peptides in the presence of ATP and magnesium. alpha-casein is the usual test substrate. In the absence of ATP, only oligopeptides shorter than five residues are hydrolyzed (such as succinyl-Leu-Tyr-|-NHMec, and Leu-Tyr-Leu-|-Tyr-Trp, in which cleavage of the -Tyr-|-Leu- and -Tyr-|-Trp bonds also occurs).. Functionally, cleaves peptides in various proteins in a process that requires ATP hydrolysis. Has a chymotrypsin-like activity. Plays a major role in the degradation of misfolded proteins. This Pinus contorta (Shore pine) protein is ATP-dependent Clp protease proteolytic subunit.